The primary structure comprises 633 residues: Phosphomethylpyrimidine synthase (633 aa).

Substrate-binding positions include N245, M274, Y303, H339, 359–361, 400–403, and E439; these read SRG and DGLR. H443 contributes to the Zn(2+) binding site. Y466 contacts substrate. H507 is a Zn(2+) binding site. C587, C590, and C595 together coordinate [4Fe-4S] cluster.

This sequence belongs to the ThiC family. Homodimer. [4Fe-4S] cluster serves as cofactor.

The catalysed reaction is 5-amino-1-(5-phospho-beta-D-ribosyl)imidazole + S-adenosyl-L-methionine = 4-amino-2-methyl-5-(phosphooxymethyl)pyrimidine + CO + 5'-deoxyadenosine + formate + L-methionine + 3 H(+). Its pathway is cofactor biosynthesis; thiamine diphosphate biosynthesis. Its function is as follows. Catalyzes the synthesis of the hydroxymethylpyrimidine phosphate (HMP-P) moiety of thiamine from aminoimidazole ribotide (AIR) in a radical S-adenosyl-L-methionine (SAM)-dependent reaction. This chain is Phosphomethylpyrimidine synthase, found in Neisseria meningitidis serogroup A / serotype 4A (strain DSM 15465 / Z2491).